The sequence spans 598 residues: Terpenoid synthase 1 (598 aa).

The Mg(2+) site is built by D362, D366, N494, and D502. Residues 362-366 (DDTCD) carry the DDXXD motif motif.

This sequence belongs to the terpene synthase family. Tpsa subfamily. Mg(2+) is required as a cofactor. Requires Mn(2+) as cofactor. Expressed exclusively in siliques.

The protein resides in the cytoplasm. Its pathway is secondary metabolite biosynthesis; terpenoid biosynthesis. This is Terpenoid synthase 1 (TPS01) from Arabidopsis thaliana (Mouse-ear cress).